The chain runs to 308 residues: Ribosomal RNA small subunit methyltransferase H (308 aa).

S-adenosyl-L-methionine contacts are provided by residues 33–35 (GGH), aspartate 52, phenylalanine 78, aspartate 99, and glutamine 106. The segment at 289 to 308 (EEIETNSRSRSAKLRVAEKL) is disordered.

It belongs to the methyltransferase superfamily. RsmH family.

Its subcellular location is the cytoplasm. The enzyme catalyses cytidine(1402) in 16S rRNA + S-adenosyl-L-methionine = N(4)-methylcytidine(1402) in 16S rRNA + S-adenosyl-L-homocysteine + H(+). In terms of biological role, specifically methylates the N4 position of cytidine in position 1402 (C1402) of 16S rRNA. In Thermoanaerobacter sp. (strain X514), this protein is Ribosomal RNA small subunit methyltransferase H.